The chain runs to 618 residues: MFDLEYQLKNLPDKPGVYLMKNNLGEIIYVGKAKILKNRVRQYFQKSQKHSEKVKAMVKNIEEFEYIITDSEIEALILECNLIKKYRPKYNILLKDDKHYPFIKVTLAEDFPRVVSTRKVTKDGSKYFGPYVDGSSVKDIIELIKKTFPIRTCKKNIVEGAKAIRPCLNYQIGLCKAPCAQYIKKSEYREIIDDVIKLLSGKHLDIVENFKLNMEKAAENLEFEKAAMLRDKINIIEKIGEKQKIILNNFDNEDYISLYSDGKDTCFQVFFLRNGKIVGREHFIIEDTFDTNSSTLISNFLKEFYGGTAYIPKTIYVPSIEDEALLEQWLTLKKESKSTIKIPIKGEKKNILVLVEKNAKTTLENFKLKYLQEKALYDNVLKDLKNILRLQEEPIRIEAFDISNIQGFDSVGSMVVFEKGRAKPSDYRRFKINTVKGADDYKSMKEILTRRFQHGLSEIKSIQDRKLEFSSGKFSVFPDLILMDGGKGQINIALEVLNTFNIDIPVCGMVKDNKHRTRGLIYNGEEIIINKYGSVMKFITRVQDEVHRFAISYHRSLRGKNSFHSLLDDIPNIGEKRKKDLLFNFKSIDNIKKATYEELLSIPSMDKKSAECVLEFFK.

The region spanning 13-92 (DKPGVYLMKN…IKKYRPKYNI (80 aa)) is the GIY-YIG domain. The 36-residue stretch at 204–239 (LDIVENFKLNMEKAAENLEFEKAAMLRDKINIIEKI) folds into the UVR domain.

It belongs to the UvrC family. As to quaternary structure, interacts with UvrB in an incision complex.

Its subcellular location is the cytoplasm. In terms of biological role, the UvrABC repair system catalyzes the recognition and processing of DNA lesions. UvrC both incises the 5' and 3' sides of the lesion. The N-terminal half is responsible for the 3' incision and the C-terminal half is responsible for the 5' incision. This is UvrABC system protein C from Clostridium botulinum (strain Okra / Type B1).